A 486-amino-acid polypeptide reads, in one-letter code: Hexokinase-2 (486 aa).

Serine 15 carries the post-translational modification Phosphoserine. The region spanning 21 to 469 (KELMQQIENF…SGAGAAVIAA (449 aa)) is the Hexokinase domain. Threonine 38 bears the Phosphothreonine mark. The interval 75-209 (TGKESGDFLA…NIPIEVVALI (135 aa)) is hexokinase small subdomain. ATP is bound by residues 86-91 (DLGGTN) and lysine 111. Position 158 is a phosphoserine (serine 158). Substrate contacts are provided by residues serine 158, 175 to 176 (TK), 210 to 211 (ND), and asparagine 237. The tract at residues 210–458 (NDTTGTLVAS…YPIKIVPAED (249 aa)) is hexokinase large subdomain. Serine 245 bears the Phosphoserine mark. Residue glutamate 269 coordinates substrate. Serine 272 bears the Phosphoserine mark. Substrate is bound at residue glutamate 302. Residues 307–308 (GY), 344–348 (TSYPA), and 419–423 (SVYNR) each bind ATP.

It belongs to the hexokinase family. In terms of assembly, homodimer.

The catalysed reaction is a D-hexose + ATP = a D-hexose 6-phosphate + ADP + H(+). The enzyme catalyses D-fructose + ATP = D-fructose 6-phosphate + ADP + H(+). It carries out the reaction D-glucose + ATP = D-glucose 6-phosphate + ADP + H(+). It functions in the pathway carbohydrate metabolism; hexose metabolism. The protein operates within carbohydrate degradation; glycolysis; D-glyceraldehyde 3-phosphate and glycerone phosphate from D-glucose: step 1/4. With respect to regulation, subject to allosteric control. Substrate inhibition by ATP. Its function is as follows. Catalyzes the phosphorylation of hexose, such as D-glucose and D-fructose, to hexose 6-phosphate (D-glucose 6-phosphate and D-fructose 6-phosphate, respectively). Mediates the initial step of glycolysis by catalyzing phosphorylation of D-glucose to D-glucose 6-phosphate. The protein is Hexokinase-2 (HXK2) of Saccharomyces cerevisiae (strain ATCC 204508 / S288c) (Baker's yeast).